A 262-amino-acid polypeptide reads, in one-letter code: Pyridoxine 5'-phosphate synthase (262 aa).

Asn-6 is a 3-amino-2-oxopropyl phosphate binding site. 8 to 9 is a binding site for 1-deoxy-D-xylulose 5-phosphate; the sequence is DH. Arg-17 lines the 3-amino-2-oxopropyl phosphate pocket. His-43 (proton acceptor) is an active-site residue. Arg-45 and His-50 together coordinate 1-deoxy-D-xylulose 5-phosphate. Residue Glu-70 is the Proton acceptor of the active site. Thr-102 is a binding site for 1-deoxy-D-xylulose 5-phosphate. The active-site Proton donor is the His-215. Residues Gly-216 and 237 to 238 each bind 3-amino-2-oxopropyl phosphate; that span reads GH.

The protein belongs to the PNP synthase family. Homooctamer; tetramer of dimers.

Its subcellular location is the cytoplasm. It carries out the reaction 3-amino-2-oxopropyl phosphate + 1-deoxy-D-xylulose 5-phosphate = pyridoxine 5'-phosphate + phosphate + 2 H2O + H(+). The protein operates within cofactor biosynthesis; pyridoxine 5'-phosphate biosynthesis; pyridoxine 5'-phosphate from D-erythrose 4-phosphate: step 5/5. Its function is as follows. Catalyzes the complicated ring closure reaction between the two acyclic compounds 1-deoxy-D-xylulose-5-phosphate (DXP) and 3-amino-2-oxopropyl phosphate (1-amino-acetone-3-phosphate or AAP) to form pyridoxine 5'-phosphate (PNP) and inorganic phosphate. The chain is Pyridoxine 5'-phosphate synthase from Helicobacter pylori (strain G27).